A 257-amino-acid polypeptide reads, in one-letter code: uncharacterized protein (257 aa).

The helical transmembrane segment at 6–26 (IFWLNLAAIIIISIVVSGGMF) threads the bilayer.

The protein belongs to the staphylococcal tandem lipoprotein family.

Its subcellular location is the cell membrane. This is an uncharacterized protein from Staphylococcus aureus (strain MSSA476).